We begin with the raw amino-acid sequence, 79 residues long: UPF0291 protein BH2353 (79 aa).

The tract at residues 57–79 is disordered; it reads GAGNDVTPDKLKQSKNKYRNDIH. Over residues 63 to 79 the composition is skewed to basic and acidic residues; that stretch reads TPDKLKQSKNKYRNDIH.

The protein belongs to the UPF0291 family.

The protein resides in the cytoplasm. This Halalkalibacterium halodurans (strain ATCC BAA-125 / DSM 18197 / FERM 7344 / JCM 9153 / C-125) (Bacillus halodurans) protein is UPF0291 protein BH2353.